A 142-amino-acid chain; its full sequence is Transcription antitermination protein NusB (142 aa).

This sequence belongs to the NusB family.

Its function is as follows. Involved in transcription antitermination. Required for transcription of ribosomal RNA (rRNA) genes. Binds specifically to the boxA antiterminator sequence of the ribosomal RNA (rrn) operons. The sequence is that of Transcription antitermination protein NusB from Streptomyces coelicolor (strain ATCC BAA-471 / A3(2) / M145).